A 427-amino-acid polypeptide reads, in one-letter code: UPF0229 protein YeaH (427 aa).

The interval 87-110 is disordered; it reads RIERSQGGGGGSGSGQGQASQDGE. Residues 92 to 102 are compositionally biased toward gly residues; sequence QGGGGGSGSGQ.

This sequence belongs to the UPF0229 family.

This chain is UPF0229 protein YeaH, found in Escherichia coli O6:K15:H31 (strain 536 / UPEC).